Here is a 470-residue protein sequence, read N- to C-terminus: MDVLCEENTSLSSPTNSFMQLNDDTRLYHNDFNSGEANTSDAFNWTVDSENRTNLSCEGCLSPPCFSLLHLQEKNWSALLTAVVIILTIAGNILVIMAVSLEKKLQNATNYFLMSLAIADMLLGFLVMPVSMLTILYGYRWPLPSKLCAVWIYLDVLFSTASIMHLCAISLDRYVAIQNPIHHRRFNSRTKAFLKIIAVWTISVGISMPIPVFGLQDDSKVFKEGSCLLADDNFVLIGSFVSFFIPLTIMVITYFLTIKSLQKEATLCVSDLGTRAKLASFSFLPQSSLSSEKLFQRSIHREPGSYGRRTMQSISNEQKACKVLGIVFFLFVVMWCPFFITNIMAVICKESCNEDVIGALLNVFVWIGYLSSAVNPLVYTLFNKTYRSAFSRYIQCQYKENKKPLQLILVNTIPALAYKSSQLQTGQKENSKQDDKATENDCTMVALGKQHSEDAPADNSNTVNEKVSCV.

Residues methionine 1–leucine 80 lie on the Extracellular side of the membrane. 6 N-linked (GlcNAc...) asparagine glycosylation sites follow: asparagine 8, asparagine 38, asparagine 44, asparagine 51, asparagine 54, and asparagine 75. A helical transmembrane segment spans residues threonine 81–methionine 97. The Cytoplasmic segment spans residues alanine 98–tyrosine 111. A helical membrane pass occupies residues phenylalanine 112–tyrosine 137. At glycine 138 to lysine 146 the chain is on the extracellular side. The chain crosses the membrane as a helical span at residues leucine 147–leucine 171. A disulfide bridge connects residues cysteine 148 and cysteine 227. Aspartate 155 contacts serotonin. Residues aspartate 172–tyrosine 174 carry the DRY motif; important for ligand-induced conformation changes motif. The Cytoplasmic segment spans residues aspartate 172–lysine 191. The helical transmembrane segment at alanine 192–leucine 215 threads the bilayer. The Extracellular segment spans residues glutamine 216 to aspartate 232. Residues asparagine 233–isoleucine 258 traverse the membrane as a helical segment. The Cytoplasmic portion of the chain corresponds to lysine 259 to cysteine 321. Serine 280 carries the post-translational modification Phosphoserine. Residues lysine 322–isoleucine 347 traverse the membrane as a helical segment. A serotonin-binding site is contributed by asparagine 342. A disulfide bridge connects residues cysteine 348 and cysteine 352. The Extracellular segment spans residues cysteine 348–aspartate 355. Residues valine 356 to leucine 381 traverse the membrane as a helical segment. The NPxxY motif; important for ligand-induced conformation changes and signaling signature appears at asparagine 375–tyrosine 379. Residues phenylalanine 382–valine 470 are Cytoplasmic-facing. Residues glycine 448–valine 470 form a disordered region. Residues aspartate 458–valine 470 are compositionally biased toward polar residues. A PDZ-binding motif is present at residues serine 468 to valine 470.

It belongs to the G-protein coupled receptor 1 family. As to quaternary structure, interacts (via C-terminus) with MPDZ and PATJ. May interact (via C-terminus) with MPP3, PRDX6, DLG4, DLG1, CASK, APBA1 and MAGI2. Interacts with GRM2 and DRD2; this may affect signaling.

The protein resides in the cell membrane. It localises to the cell projection. Its subcellular location is the dendrite. It is found in the axon. The protein localises to the cytoplasmic vesicle. The protein resides in the membrane. It localises to the caveola. Its subcellular location is the presynapse. With respect to regulation, G-protein coupled receptor activity is regulated by lipids: oleamide increases HTR2A-mediated activity. In terms of biological role, G-protein coupled receptor for 5-hydroxytryptamine (serotonin). Also functions as a receptor for various drugs and psychoactive substances, including mescaline, psilocybin, 1-(2,5-dimethoxy-4-iodophenyl)-2-aminopropane (DOI) and lysergic acid diethylamide (LSD). Ligand binding causes a conformation change that triggers signaling via guanine nucleotide-binding proteins (G proteins) and modulates the activity of downstream effectors. HTR2A is coupled to G(q)/G(11) G alpha proteins and activates phospholipase C-beta, releasing diacylglycerol (DAG) and inositol 1,4,5-trisphosphate (IP3) second messengers that modulate the activity of phosphatidylinositol 3-kinase and promote the release of Ca(2+) ions from intracellular stores, respectively. Beta-arrestin family members inhibit signaling via G proteins and mediate activation of alternative signaling pathways. Affects neural activity, perception, cognition and mood. Plays a role in the regulation of behavior, including responses to anxiogenic situations and psychoactive substances. Plays a role in intestinal smooth muscle contraction, and may play a role in arterial vasoconstriction. The polypeptide is 5-hydroxytryptamine receptor 2A (HTR2A) (Sus scrofa (Pig)).